The primary structure comprises 1381 residues: Regulator of G-protein signaling 12 (1381 aa).

Residues 21 to 98 (SVEVARGRAG…VLHMVIAEGT (78 aa)) enclose the PDZ domain. Ser-171 and Ser-194 each carry phosphoserine. A Glycyl lysine isopeptide (Lys-Gly) (interchain with G-Cter in SUMO2) cross-link involves residue Lys-195. In terms of domain architecture, PID spans 223-390 (SILNVAMVVG…VLQFISVLYR (168 aa)). Disordered stretches follow at residues 409 to 428 (ADAH…IGNF), 442 to 528 (LGGG…GAAG), and 620 to 644 (RKTK…SQRT). Polar residues predominate over residues 412–428 (HQNNSTSSNSDSGIGNF). An omega-N-methylarginine mark is found at Arg-524 and Arg-633. Phosphoserine occurs at positions 661 and 671. Residues 715–832 (SFERLLQDPV…LKSQLYQECV (118 aa)) enclose the RGS domain. The tract at residues 842–942 (PDSQQVPSSP…ESQGSVSSAG (101 aa)) is disordered. The span at 849–869 (SSPASKHSISSDHSNVSTPKK) shows a compositional bias: low complexity. A phosphoserine mark is found at Ser-850 and Ser-879. The segment covering 914-923 (DHGDHAHDAP) has biased composition (basic and acidic residues). Phosphoserine is present on Ser-943. RBD domains are found at residues 962–1032 (KHCC…LEKR) and 1034–1104 (LFRL…LEER). Residues 1102–1117 (EERDPSRGKVSTDKQK) show a composition bias toward basic and acidic residues. Residues 1102–1169 (EERDPSRGKV…RDPRLSKREE (68 aa)) are disordered. Over residues 1122-1132 (KQNSAVNSSPR) the composition is skewed to polar residues. Over residues 1151-1169 (IRGENGKSARDPRLSKREE) the composition is skewed to basic and acidic residues. A GoLoco domain is found at 1187–1209 (AEEFFELISKAQSNRADDQRGLL). Disordered stretches follow at residues 1227–1318 (SELA…QEGT) and 1347–1381 (LMGE…TSRF). Over residues 1261–1280 (SDSPATSPASAQSPCSAYSP) the composition is skewed to low complexity. A compositionally biased stretch (pro residues) spans 1361-1381 (LPPPPTPQDTPGPPRPGTSRF).

Interacts with GNAI1, GNAI2 and GNAI3; the interactions are GDP-dependent. As to expression, expressed in brain.

Its subcellular location is the nucleus. It is found in the cytoplasm. The protein localises to the cell projection. It localises to the dendrite. The protein resides in the synapse. In terms of biological role, regulates G protein-coupled receptor signaling cascades. Inhibits signal transduction by increasing the GTPase activity of G protein alpha subunits, thereby driving them into their inactive GDP-bound form. The chain is Regulator of G-protein signaling 12 (Rgs12) from Mus musculus (Mouse).